The sequence spans 430 residues: MAKIQAIRGTKDILPDEIQYWQFIHNKISKLLECANYQEIRTPIFENSELYDRGIGEDTDIVNKEMYRFHDRSNRDITLRPEGTAGIVRSFIENKMSYHHSLQRLWYSGPMFRYERPQSGRQRQFHQLGIEFIGSLDARADSEVIHLAMSIFNNLNLHNLKLDLNSIGKVEDRSIYQVKLRDYLTKYHDDLDTDSQKRLTSNPIRILDSKDSNTQKILTEAPKISDFLSLESQQHFGDVCNYLKLLNIPYNINNKLVRGLDYYNDTAFEIKTLTSKGQDTICGGGRYDSLVHQLGGKATPAVGCAIGLERLLLIAKDNIDLPNKSIDFYIATQGTKANETGMQIMRFLHQQFFKIEIDVSSSNFSKQIKQANKKRAVACIIIGSNEIAEGIITIKWLFSQKQENITVVQLKHSVSYLKKKILFYKSSKNY.

The protein belongs to the class-II aminoacyl-tRNA synthetase family.

The protein resides in the plastid. It is found in the chloroplast. The catalysed reaction is tRNA(His) + L-histidine + ATP = L-histidyl-tRNA(His) + AMP + diphosphate + H(+). The protein is Histidine--tRNA ligase, chloroplastic of Pyropia yezoensis (Susabi-nori).